The sequence spans 349 residues: 4-hydroxy-3-methylbut-2-en-1-yl diphosphate synthase (flavodoxin) (349 aa).

Residues C264, C267, C299, and E306 each coordinate [4Fe-4S] cluster.

Belongs to the IspG family. Requires [4Fe-4S] cluster as cofactor.

It carries out the reaction (2E)-4-hydroxy-3-methylbut-2-enyl diphosphate + oxidized [flavodoxin] + H2O + 2 H(+) = 2-C-methyl-D-erythritol 2,4-cyclic diphosphate + reduced [flavodoxin]. The protein operates within isoprenoid biosynthesis; isopentenyl diphosphate biosynthesis via DXP pathway; isopentenyl diphosphate from 1-deoxy-D-xylulose 5-phosphate: step 5/6. Converts 2C-methyl-D-erythritol 2,4-cyclodiphosphate (ME-2,4cPP) into 1-hydroxy-2-methyl-2-(E)-butenyl 4-diphosphate. This Clostridium tetani (strain Massachusetts / E88) protein is 4-hydroxy-3-methylbut-2-en-1-yl diphosphate synthase (flavodoxin).